Here is a 134-residue protein sequence, read N- to C-terminus: Small ribosomal subunit protein bS6 (134 aa).

The segment at 103–134 (AAPVKSAEEGTEEVAAEAATEAPAETTTTVEV) is disordered. Residues 118–134 (AEAATEAPAETTTTVEV) show a composition bias toward low complexity.

The protein belongs to the bacterial ribosomal protein bS6 family.

In terms of biological role, binds together with bS18 to 16S ribosomal RNA. In Geobacter sp. (strain M21), this protein is Small ribosomal subunit protein bS6.